The sequence spans 205 residues: Isochorismatase domain-containing protein 2 (205 aa).

A phosphoserine mark is found at Ser-7 and Ser-202.

It belongs to the isochorismatase family. In terms of assembly, interacts with CDKN2A.

The protein resides in the cytoplasm. It is found in the nucleus. The polypeptide is Isochorismatase domain-containing protein 2 (ISOC2) (Homo sapiens (Human)).